The chain runs to 221 residues: Growth hormone-releasing peptides (221 aa).

An N-terminal signal peptide occupies residues 1–25 (MHLKIGTLTIRTIMLFTLCTFLTLF). Residues 26–95 (AFSTCFDETK…QPENEFLQER (70 aa)) constitute a propeptide that is removed on maturation. Phe-107 is subject to Phenylalanine amide. Positions 110–127 (TSDDKIAKSIPSFDKIAK) are excised as a propeptide. Phenylalanine amide is present on residues Phe-136, Phe-156, and Phe-176. Positions 179–221 (TPHSDRLQYEMNSHPLELKNPEEDSDRKKRQAMTFRIRTDLQM) are excised as a propeptide.

This sequence belongs to the FARP (FMRFamide related peptide) family. As to expression, observed in the suprachiasmatic nucleus and in several telencephalic and diencephalic regions.

Its subcellular location is the secreted. Primary role is to release GH from the pituitary. May act as an endogenous ligand in the bullfrog hypothalamo-hypophysial system. This Aquarana catesbeiana (American bullfrog) protein is Growth hormone-releasing peptides.